We begin with the raw amino-acid sequence, 156 residues long: Small ribosomal subunit protein uS7 (156 aa).

It belongs to the universal ribosomal protein uS7 family. Part of the 30S ribosomal subunit. Contacts proteins S9 and S11.

In terms of biological role, one of the primary rRNA binding proteins, it binds directly to 16S rRNA where it nucleates assembly of the head domain of the 30S subunit. Is located at the subunit interface close to the decoding center, probably blocks exit of the E-site tRNA. The protein is Small ribosomal subunit protein uS7 of Synechocystis sp. (strain ATCC 27184 / PCC 6803 / Kazusa).